The following is a 170-amino-acid chain: Fluoride-specific ion channel FluC 2 (170 aa).

4 helical membrane-spanning segments follow: residues 8–28 (ALVFLGGALGAIIRWTLTVWI), 55–75 (IALLVVNVLGALLLGLLVGMI), 84–104 (TFWGTGVLGGFTSFSSLAAAV), and 114–134 (ILIGGTYGVFTLALGLIAAAM). The Na(+) site is built by G92 and T95.

Belongs to the fluoride channel Fluc/FEX (TC 1.A.43) family.

Its subcellular location is the cell membrane. It carries out the reaction fluoride(in) = fluoride(out). Its activity is regulated as follows. Na(+) is not transported, but it plays an essential structural role and its presence is essential for fluoride channel function. Functionally, fluoride-specific ion channel. Important for reducing fluoride concentration in the cell, thus reducing its toxicity. This is Fluoride-specific ion channel FluC 2 from Corynebacterium jeikeium (strain K411).